Here is a 110-residue protein sequence, read N- to C-terminus: Nucleoid-associated protein Mkms_4993 (110 aa).

It belongs to the YbaB/EbfC family. Homodimer.

The protein resides in the cytoplasm. It localises to the nucleoid. In terms of biological role, binds to DNA and alters its conformation. May be involved in regulation of gene expression, nucleoid organization and DNA protection. In Mycobacterium sp. (strain KMS), this protein is Nucleoid-associated protein Mkms_4993.